A 275-amino-acid chain; its full sequence is Dermonecrotic toxin SpeSicTox-betaIIA3i (275 aa).

H5 is a catalytic residue. Residues E25 and D27 each coordinate Mg(2+). Residue H41 is the Nucleophile of the active site. Disulfide bonds link C45/C51 and C47/C190. Residue D85 participates in Mg(2+) binding.

The protein belongs to the arthropod phospholipase D family. Class II subfamily. Mg(2+) is required as a cofactor. As to expression, expressed by the venom gland.

It is found in the secreted. It carries out the reaction an N-(acyl)-sphingosylphosphocholine = an N-(acyl)-sphingosyl-1,3-cyclic phosphate + choline. The enzyme catalyses an N-(acyl)-sphingosylphosphoethanolamine = an N-(acyl)-sphingosyl-1,3-cyclic phosphate + ethanolamine. It catalyses the reaction a 1-acyl-sn-glycero-3-phosphocholine = a 1-acyl-sn-glycero-2,3-cyclic phosphate + choline. The catalysed reaction is a 1-acyl-sn-glycero-3-phosphoethanolamine = a 1-acyl-sn-glycero-2,3-cyclic phosphate + ethanolamine. In terms of biological role, dermonecrotic toxins cleave the phosphodiester linkage between the phosphate and headgroup of certain phospholipids (sphingolipid and lysolipid substrates), forming an alcohol (often choline) and a cyclic phosphate. This toxin acts on sphingomyelin (SM). It may also act on ceramide phosphoethanolamine (CPE), lysophosphatidylcholine (LPC) and lysophosphatidylethanolamine (LPE), but not on lysophosphatidylserine (LPS), and lysophosphatidylglycerol (LPG). It acts by transphosphatidylation, releasing exclusively cyclic phosphate products as second products. Induces dermonecrosis, hemolysis, increased vascular permeability, edema, inflammatory response, and platelet aggregation. The sequence is that of Dermonecrotic toxin SpeSicTox-betaIIA3i from Sicarius peruensis (Six-eyed sand spider).